The following is a 429-amino-acid chain: GTPase Obg (429 aa).

An Obg domain is found at 1 to 158 (MFVDQVKIYV…RNVQLELKVL (158 aa)). Positions 124–145 (RGNKRFATPANPAPELSENGEP) are disordered. Residues 159–329 (ADVGLVGFPS…LLLAIADKLE (171 aa)) form the OBG-type G domain. GTP contacts are provided by residues 165 to 172 (GFPSVGKS), 190 to 194 (FTTIV), 212 to 215 (DLPG), 282 to 285 (NKMD), and 310 to 312 (SAV). Mg(2+)-binding residues include serine 172 and threonine 192. The region spanning 351–429 (KYVAEEPDFE…LLDYEFEFMD (79 aa)) is the OCT domain.

The protein belongs to the TRAFAC class OBG-HflX-like GTPase superfamily. OBG GTPase family. In terms of assembly, monomer. It depends on Mg(2+) as a cofactor.

Its subcellular location is the cytoplasm. In terms of biological role, an essential GTPase which binds GTP, GDP and possibly (p)ppGpp with moderate affinity, with high nucleotide exchange rates and a fairly low GTP hydrolysis rate. Plays a role in control of the cell cycle, stress response, ribosome biogenesis and in those bacteria that undergo differentiation, in morphogenesis control. The sequence is that of GTPase Obg from Listeria innocua serovar 6a (strain ATCC BAA-680 / CLIP 11262).